The chain runs to 103 residues: Nucleoid-associated protein NIS_0256 (103 aa).

Belongs to the YbaB/EbfC family. Homodimer.

The protein resides in the cytoplasm. Its subcellular location is the nucleoid. Binds to DNA and alters its conformation. May be involved in regulation of gene expression, nucleoid organization and DNA protection. This chain is Nucleoid-associated protein NIS_0256, found in Nitratiruptor sp. (strain SB155-2).